A 283-amino-acid chain; its full sequence is Glutamate racemase (283 aa).

Substrate is bound by residues 28-29 (DS) and 60-61 (YG). C92 (proton donor/acceptor) is an active-site residue. 93–94 (NT) contacts substrate. C204 acts as the Proton donor/acceptor in catalysis. 205 to 206 (TH) contributes to the substrate binding site.

Belongs to the aspartate/glutamate racemases family.

It catalyses the reaction L-glutamate = D-glutamate. It functions in the pathway cell wall biogenesis; peptidoglycan biosynthesis. Its function is as follows. Provides the (R)-glutamate required for cell wall biosynthesis. This Salmonella gallinarum (strain 287/91 / NCTC 13346) protein is Glutamate racemase.